The sequence spans 202 residues: Cold-regulated 413 plasma membrane protein 4 (202 aa).

Residues 1–42 (MGRGEFLAMKTEENAANLINSDMNEFVAAAKKLVKDVGMLGG) are Extracellular-facing. A helical transmembrane segment spans residues 43–63 (VGFGTSVLQWAASIFAIYLLI). Over 64–72 (LDRTNWKTK) the chain is Cytoplasmic. Residues 73-93 (MLTTLLVPYIFFTLPSVIFQF) traverse the membrane as a helical segment. At 94 to 97 (FSGD) the chain is on the extracellular side. The helical transmembrane segment at 98 to 118 (FGKWIALIAIIVRLFFPKEFP) threads the bilayer. Residue glutamate 119 is a topological domain, cytoplasmic. The chain crosses the membrane as a helical span at residues 120–140 (WLEIPVALILIVVVSPSLIAW). Residues 141 to 145 (TLRES) are Extracellular-facing. The helical transmembrane segment at 146 to 166 (WVGAVICLVIACYLFHEHIKA) threads the bilayer. At 167 to 181 (SGGFKNSFTQKNGIS) the chain is on the cytoplasmic side. The helical transmembrane segment at 182-202 (NTIGIVALLVYPVWTIFFHIF) threads the bilayer.

The protein belongs to the Cold-regulated 413 protein family.

It is found in the cell membrane. This Arabidopsis thaliana (Mouse-ear cress) protein is Cold-regulated 413 plasma membrane protein 4.